The following is a 155-amino-acid chain: Large ribosomal subunit protein uL16 (155 aa).

A disordered region spans residues 1–22; sequence MLSPKRTKYRKQQRGRMKGKAT.

It belongs to the universal ribosomal protein uL16 family. As to quaternary structure, part of the 50S ribosomal subunit.

Its function is as follows. Binds 23S rRNA and is also seen to make contacts with the A and possibly P site tRNAs. The sequence is that of Large ribosomal subunit protein uL16 from Synechococcus sp. (strain JA-2-3B'a(2-13)) (Cyanobacteria bacterium Yellowstone B-Prime).